Reading from the N-terminus, the 261-residue chain is Global transcriptional regulator CodY (261 aa).

The tract at residues 1-159 (MPNLLEKTRK…ASTVVGIQLL (159 aa)) is GAF domain. Residues 207–226 (ASVIADRIGITRSVIVNALR) constitute a DNA-binding region (H-T-H motif).

Belongs to the CodY family.

The protein resides in the cytoplasm. DNA-binding global transcriptional regulator which is involved in the adaptive response to starvation and acts by directly or indirectly controlling the expression of numerous genes in response to nutrient availability. During rapid exponential growth, CodY is highly active and represses genes whose products allow adaptation to nutrient depletion. In Streptococcus agalactiae serotype Ia (strain ATCC 27591 / A909 / CDC SS700), this protein is Global transcriptional regulator CodY.